A 52-amino-acid chain; its full sequence is uncharacterized protein (52 aa).

This is an uncharacterized protein from Homo sapiens (Human).